Here is an 842-residue protein sequence, read N- to C-terminus: Glycogen phosphorylase, muscle form (842 aa).

The residue at position 2 (Ser2) is an N-acetylserine. Ser15 carries the post-translational modification Phosphoserine; by PHK; in form phosphorylase A. Positions 43 and 76 each coordinate AMP. A phosphotyrosine mark is found at Tyr204 and Tyr227. 310 to 319 serves as a coordination point for AMP; sequence RRFKSSKFGC. Ser430 bears the Phosphoserine mark. Tyr473 is subject to Phosphotyrosine. N6-(pyridoxal phosphate)lysine is present on Lys681. A phosphoserine mark is found at Ser747 and Ser748.

Belongs to the glycogen phosphorylase family. Homodimer. Homotetramer; to form the enzymatically active phosphorylase A. The cofactor is pyridoxal 5'-phosphate. Post-translationally, phosphorylation of Ser-15 converts phosphorylase B (unphosphorylated) to phosphorylase A.

It carries out the reaction [(1-&gt;4)-alpha-D-glucosyl](n) + phosphate = [(1-&gt;4)-alpha-D-glucosyl](n-1) + alpha-D-glucose 1-phosphate. Its activity is regulated as follows. Allosterically regulated through the non-covalent binding of metabolites, being activated by AMP and inhibited by ATP, ADP, and glucose-6-phosphate. The activity is also controlled by post-translational modifications including phosphorylation. Its function is as follows. Allosteric enzyme that catalyzes the rate-limiting step in glycogen catabolism, the phosphorolytic cleavage of glycogen to produce glucose-1-phosphate, and plays a central role in maintaining cellular and organismal glucose homeostasis. The protein is Glycogen phosphorylase, muscle form of Bos taurus (Bovine).